A 30-amino-acid polypeptide reads, in one-letter code: Basic phospholipase A2 CM-I (30 aa).

It belongs to the phospholipase A2 family. Group I subfamily. The cofactor is Ca(2+). Expressed by the venom gland.

The protein resides in the secreted. The catalysed reaction is a 1,2-diacyl-sn-glycero-3-phosphocholine + H2O = a 1-acyl-sn-glycero-3-phosphocholine + a fatty acid + H(+). Snake venom phospholipase A2 (PLA2) that shows weak anticoagulant activity. Is more catalytically active than the strong anticoagulant protein CM-IV found in this venom. Acts by inhibiting the complex composed of tissue factor (F3) and coagulation factor VIIa (F7) (TF-VIIa complex) by only enzymatic mechanism. PLA2 catalyzes the calcium-dependent hydrolysis of the 2-acyl groups in 3-sn-phosphoglycerides. This is Basic phospholipase A2 CM-I from Naja nigricollis (Black-necked spitting cobra).